We begin with the raw amino-acid sequence, 166 residues long: 3-isopropylmalate dehydratase small subunit 1 (166 aa).

This sequence belongs to the LeuD family. LeuD type 2 subfamily. As to quaternary structure, heterodimer of LeuC and LeuD.

The enzyme catalyses (2R,3S)-3-isopropylmalate = (2S)-2-isopropylmalate. It functions in the pathway amino-acid biosynthesis; L-leucine biosynthesis; L-leucine from 3-methyl-2-oxobutanoate: step 2/4. Its function is as follows. Catalyzes the isomerization between 2-isopropylmalate and 3-isopropylmalate, via the formation of 2-isopropylmaleate. This Thermotoga maritima (strain ATCC 43589 / DSM 3109 / JCM 10099 / NBRC 100826 / MSB8) protein is 3-isopropylmalate dehydratase small subunit 1 (leuD1).